Here is a 517-residue protein sequence, read N- to C-terminus: Serine carboxypeptidase ctsa-3.2 (517 aa).

An N-terminal signal peptide occupies residues 1-21 (MWWTSLVFSVLLFDLIFISNC). Ser-172 is a catalytic residue. A glycan (N-linked (GlcNAc...) asparagine) is linked at Asn-269. Active-site residues include Asp-418 and His-485.

The protein belongs to the peptidase S10 family.

This chain is Serine carboxypeptidase ctsa-3.2, found in Caenorhabditis elegans.